Consider the following 311-residue polypeptide: 2-phospho-L-lactate transferase (311 aa).

Positions 52 and 91 each coordinate 7,8-didemethyl-8-hydroxy-5-deazariboflavin.

It belongs to the CofD family. In terms of assembly, homodimer. Mg(2+) is required as a cofactor.

It catalyses the reaction (2S)-lactyl-2-diphospho-5'-guanosine + 7,8-didemethyl-8-hydroxy-5-deazariboflavin = oxidized coenzyme F420-0 + GMP + H(+). Its pathway is cofactor biosynthesis; coenzyme F420 biosynthesis. Its activity is regulated as follows. Inhibited by EDTA in vitro. Functionally, catalyzes the transfer of the 2-phospholactate moiety from (2S)-lactyl-2-diphospho-5'-guanosine to 7,8-didemethyl-8-hydroxy-5-deazariboflavin (FO) with the formation of oxidized coenzyme F420-0 and GMP. In Methanocaldococcus jannaschii (strain ATCC 43067 / DSM 2661 / JAL-1 / JCM 10045 / NBRC 100440) (Methanococcus jannaschii), this protein is 2-phospho-L-lactate transferase.